Reading from the N-terminus, the 244-residue chain is tRNA pseudouridine synthase A (244 aa).

Asp-52 (nucleophile) is an active-site residue. Tyr-110 provides a ligand contact to substrate.

It belongs to the tRNA pseudouridine synthase TruA family. As to quaternary structure, homodimer.

The catalysed reaction is uridine(38/39/40) in tRNA = pseudouridine(38/39/40) in tRNA. Functionally, formation of pseudouridine at positions 38, 39 and 40 in the anticodon stem and loop of transfer RNAs. This chain is tRNA pseudouridine synthase A, found in Clostridium kluyveri (strain ATCC 8527 / DSM 555 / NBRC 12016 / NCIMB 10680 / K1).